A 333-amino-acid polypeptide reads, in one-letter code: MISLESQVLERHLPLFADKSVLLAGGVNDDFPQKIQSQCRSVKIWSWYFDYVNQIQGKSAVDFSVIFTGRADLIVYYWTKNKQEVQFQLMQLLANAPVGQEVLIIGENRSGVRSAEKMLAHFGDIGKIDSARRCGLYHFTLQKQPNFELENFWKTYRSPQLGELIVYSLPGVFSANELDVGTQLLLSTVKDNIRGDVLDLGCGAGVIGSMIKLKNPPAKVTMTDIHAMALASAERTLLENKLSGQVLASDVFSHVEGKFDLIISNPPFHDGIDTAYRAVRELISNAKWHLVPGGELRIVANAFLPYPDLLDEYFGGHKVLAQTNKFKVYSVIG.

This sequence belongs to the methyltransferase superfamily. RsmC family. As to quaternary structure, monomer.

It is found in the cytoplasm. It catalyses the reaction guanosine(1207) in 16S rRNA + S-adenosyl-L-methionine = N(2)-methylguanosine(1207) in 16S rRNA + S-adenosyl-L-homocysteine + H(+). Its function is as follows. Specifically methylates the guanine in position 1207 of 16S rRNA in the 30S particle. This chain is Ribosomal RNA small subunit methyltransferase C, found in Mannheimia succiniciproducens (strain KCTC 0769BP / MBEL55E).